We begin with the raw amino-acid sequence, 379 residues long: MNQAFLPFSRPSIGEEEIAAVEQVLRSGWITTGPKNQELEQQFAERVGARHAVALSSATGAMHITLLALGIGPGDEVITPSQTWVSTANMICLLGATPVFVDVDPDTLMSDAATIEAAITPRTKAIIPVHYAGAAFDLDPLYALADKHGIAVIEDAAHAAGTTYRGRAIGARGTAIFSFHAIKNMTCAEGAMFVSDDEALANRVRMLKFHGLGVDAYDRLTHGRKPQAQVIEPGFKYNLADMNAAIALVQLQRLDEINAKREVLAKAYLQRLEGLPVQPLLLPQYPQQHAWHLFILRIDAERCGLDREAFMKGLQEQNIGTGIHFIATHLHTYYRQRFPEVQLPHTEWNSARLCSIPLFPDMTLDDVERVTGAIANLLD.

Lys183 bears the N6-(pyridoxal phosphate)lysine mark.

This sequence belongs to the DegT/DnrJ/EryC1 family. ArnB subfamily. In terms of assembly, homodimer. Pyridoxal 5'-phosphate serves as cofactor.

It catalyses the reaction UDP-4-amino-4-deoxy-beta-L-arabinose + 2-oxoglutarate = UDP-beta-L-threo-pentopyranos-4-ulose + L-glutamate. The protein operates within nucleotide-sugar biosynthesis; UDP-4-deoxy-4-formamido-beta-L-arabinose biosynthesis; UDP-4-deoxy-4-formamido-beta-L-arabinose from UDP-alpha-D-glucuronate: step 2/3. Its pathway is bacterial outer membrane biogenesis; lipopolysaccharide biosynthesis. Functionally, catalyzes the conversion of UDP-4-keto-arabinose (UDP-Ara4O) to UDP-4-amino-4-deoxy-L-arabinose (UDP-L-Ara4N). The modified arabinose is attached to lipid A and is required for resistance to polymyxin and cationic antimicrobial peptides. This is UDP-4-amino-4-deoxy-L-arabinose--oxoglutarate aminotransferase from Pseudomonas fluorescens (strain ATCC BAA-477 / NRRL B-23932 / Pf-5).